We begin with the raw amino-acid sequence, 331 residues long: MTPPLLALEEHYYSTAIFNSIGETFQRTLQGVPGLADQLRSLGDGRLEAMNRGNISLQVVSHAFTPGGPSAEACRAGNDELAAEIAQISDPQRFAAFAVLPVADPTASAAELDRSVSELGFVGALIDNHADGKHFDGHDYDVLWAKACELDVPIYLHPTWPSARMAENFMGSYPVPVGISLGGPGWGWHPDVGLHVLKLFAAGVFDRFPRLKIIVGHMGEMLPYMLERASDMSTRWGGWGPRDRPLRQVWDENIWITTSGSWSLAPLKCILHNTKVERIMYSVDYPFESNERGLEWFKELEGSGLLTEEQLEMVAYRNAEDLLKVHMKKEQ.

The Zn(2+) site is built by H11, H157, and D284.

It belongs to the metallo-dependent hydrolases superfamily. ACMSD family.

The protein operates within secondary metabolite biosynthesis. Decarboxylase; part of the gene cluster that mediates the biosynthesis of orsellinic acid, as well as of the cathepsin K inhibitors F9775 A and F9775 B. The non-reducing polyketide synthase orsA produces orsellinic acid by condensing acetyl-CoA with 3 malonyl-CoA units. Further modifications by the decarboxylase orsB and the tyrosinase-like protein orsC lead to the production of F9775 A and F9775 B. The functions of orsD and orsE remain unclear since only orsB and orsC are required to convert orsellinic acid into F9775 A and F9775 B. In Emericella nidulans (strain FGSC A4 / ATCC 38163 / CBS 112.46 / NRRL 194 / M139) (Aspergillus nidulans), this protein is Decarboxylase orsB.